The chain runs to 69 residues: Protein translocase subunit SecE (69 aa).

Residues 43–63 (VAGAGILVIGFVGFLIYVLLT) traverse the membrane as a helical segment.

Belongs to the SecE/SEC61-gamma family. As to quaternary structure, component of the Sec protein translocase complex. Heterotrimer consisting of SecY (alpha), SecG (beta) and SecE (gamma) subunits. The heterotrimers can form oligomers, although 1 heterotrimer is thought to be able to translocate proteins. Interacts with the ribosome. May interact with SecDF, and other proteins may be involved.

It is found in the cell membrane. Its function is as follows. Essential subunit of the Sec protein translocation channel SecYEG. Clamps together the 2 halves of SecY. May contact the channel plug during translocation. The polypeptide is Protein translocase subunit SecE (Methanococcoides burtonii (strain DSM 6242 / NBRC 107633 / OCM 468 / ACE-M)).